The following is a 366-amino-acid chain: Beta sliding clamp (366 aa).

The protein belongs to the beta sliding clamp family. As to quaternary structure, forms a ring-shaped head-to-tail homodimer around DNA which binds and tethers DNA polymerases and other proteins to the DNA. The DNA replisome complex has a single clamp-loading complex (3 tau and 1 each of delta, delta', psi and chi subunits) which binds 3 Pol III cores (1 core on the leading strand and 2 on the lagging strand) each with a beta sliding clamp dimer. Additional proteins in the replisome are other copies of gamma, psi and chi, Ssb, DNA helicase and RNA primase.

Its subcellular location is the cytoplasm. In terms of biological role, confers DNA tethering and processivity to DNA polymerases and other proteins. Acts as a clamp, forming a ring around DNA (a reaction catalyzed by the clamp-loading complex) which diffuses in an ATP-independent manner freely and bidirectionally along dsDNA. Initially characterized for its ability to contact the catalytic subunit of DNA polymerase III (Pol III), a complex, multichain enzyme responsible for most of the replicative synthesis in bacteria; Pol III exhibits 3'-5' exonuclease proofreading activity. The beta chain is required for initiation of replication as well as for processivity of DNA replication. This chain is Beta sliding clamp (dnaN), found in Buchnera aphidicola subsp. Acyrthosiphon pisum (strain APS) (Acyrthosiphon pisum symbiotic bacterium).